The following is a 354-amino-acid chain: Interferon-inducible protein AIM2 (354 aa).

One can recognise a Pyrin domain in the interval 1 to 87 (MESEYREMLL…ANALEEKKKE (87 aa)). The tract at residues 95 to 124 (NTKKRGTQKVENRSQAENCSAASATRSDND) is disordered. Polar residues predominate over residues 109-120 (QAENCSAASATR). In terms of domain architecture, HIN-200 spans 144–341 (MVAEQEAIRE…SGPCSFFKVI (198 aa)).

The protein belongs to the HIN-200 family. As to quaternary structure, self-associates; forms homooligomers in response to cytosolic double-stranded DNA (dsDNA) and the dsDNA seems to serve as oligomerization platform. Component of AIM2 inflammasome, which consists of a signal sensor component (AIM2), an adapter (PYCARD/ASC), which recruits an effector pro-inflammatory caspase (CASP1). Interacts (via pyrin domain) with PYCARD/ASC (via pyrin domain); interaction is direct. Component of the AIM2 PANoptosome complex, a multiprotein complex that drives inflammatory cell death (PANoptosis). Interacts with EIF2AK2/PKR. Interacts with MAPRE1. Interacts (via HIN-200 domain) with IFI202 (via HIN-200 domain 2); preventing activation of the AIM2 inflammasome. Interacts with RACK1; promoting association with PP2A phosphatase and dephosphorylation of AKT1. Interacts with TRIM11; promoting AIM2 recruitment to autophagosomes and autophagy-dependent degradation. Post-translationally, degraded via selective autophagy following interaction with TRIM11. As to expression, expressed in developing neurons. Highly expressed in regulatory T-cells (Treg).

The protein localises to the cytoplasm. It localises to the inflammasome. The protein resides in the nucleus. Inactive in absence of double-stranded DNA (dsDNA). Homooligomerizes upon binding to dsDNA, dsDNA serving as an oligomerization platform. AIM2 requires large dsDNA to generate a structural template that couples dsDNA ligand-binding and homooligomerization. Homooligomerization is followed by recruitment of PYCARD/ASC to initiate speck formation (nucleation). AIM2 and PYCARD/ASC homooligomer filaments assemble bidirectionally and the recognition between AIM2 and PYCARD/ASC oligomers occurs in a head-to-tail manner. Clustered PYCARD/ASC nucleates the formation of CASP1 filaments through the interaction of their respective CARD domains, acting as a platform for CASP1 polymerization and activation. Active CASP1 then specifically processes protein precursors, such as gasdermin-D (GSDMD), IL1B and IL18, leading to the release of mature cytokines in the extracellular milieu or pyroptosis, depending on cell type. AIM2 can be activated in response to events that cause genomic DNA (HIV protease inhibitor nelfinavir) or mitochondrial DNA release in the cytoplasm (such as Perfluoroalkyl substance pollutants or cholesterol overload). Activation of the AIM2 inflammasome is inhibited by IFI202. Activation of the AIM2 inflammasome is inhibited by TRIM11, which promotes autophagy-dependent degradation of AIM2. Sensor component of the AIM2 inflammasome, which mediates inflammasome activation in response to the presence of double-stranded DNA (dsDNA) in the cytosol, leading to subsequent pyroptosis. Inflammasomes are supramolecular complexes that assemble in the cytosol in response to pathogens and other damage-associated signals and play critical roles in innate immunity and inflammation. Acts as a recognition receptor (PRR): specifically recognizes and binds dsDNA in the cytosol, and mediates the formation of the inflammasome polymeric complex composed of AIM2, CASP1 and PYCARD/ASC. Recruitment of pro-caspase-1 (proCASP1) to the AIM2 inflammasome promotes caspase-1 (CASP1) activation, which subsequently cleaves and activates inflammatory cytokines IL1B and IL18 and gasdermin-D (GSDMD), promoting cytokine secretion. In some cells, CASP1 activation mediates cleavage and activation of GSDMD, triggering pyroptosis without promoting cytokine secretion. Detects cytosolic dsDNA of viral and bacterial origin in a non-sequence-specific manner. Involved in the DNA damage response caused by acute ionizing radiation by mediating pyroptosis of intestinal epithelial cells and bone marrow cells in response to double-strand DNA breaks. Mechanistically, AIM2 senses DNA damage in the nucleus to mediate inflammasome assembly and inflammatory cell death. Also acts as a regulator of neurodevelopment via its role in the DNA damage response: acts by promoting neural cell death in response to DNA damage in the developing brain, thereby purging genetically compromised cells of the central nervous system. Pyroptosis mediated by the AIM2 inflammasome in response to DNA damage is dependent on GSDMD without involving IL1B and IL18 cytokine secretion. Also acts as a mediator of pyroptosis, necroptosis and apoptosis (PANoptosis), an integral part of host defense against pathogens, in response to bacterial infection. Can also trigger PYCARD/ASC-dependent, caspase-1-independent cell death that involves caspase-8 (CASP8). Functionally, also acts as a tumor suppressor independently of its role in inflammatory response. Able to suppress overt cell proliferation in enterocytes: restricts stem cell proliferation in the intestinal mucosa in an inflammasome-independent manner, contributing to a decrease in the likelihood of colorectal cancer development. AIM2 suppresses cell proliferation by inhibiting phosphorylation of AKT1 at 'Ser-473', preventing AKT1 activation and AKT-mTOR signaling pathway. Inhibits AKT1 phosphorylation both by inhibiting the activity of PRKDC/DNA-PK kinase and promoting dephosphorylation by PP2A phosphatase. Also acts as a key regulator of regulatory T-cells (Treg) homeostasis by promoting their stability: acts by preventing AKT1 activation. Its role in Treg homeostasis is important to restain autoimmune diseases. This is Interferon-inducible protein AIM2 from Mus musculus (Mouse).